A 157-amino-acid chain; its full sequence is MKKKIKIFIDGACLGNPGPGGYGVIICGKKLYKEISNGYYLTTNNRMEIMAAIIALESLHDMYNIIINTDSKYLKNGITKWIKVWKNNKWKTNNNKSVKNIDLWIKLEYLSKKHFINWNWIKGHTNNIKHDRCDFLAKISAKNPNAIDKIYQKIKNF.

The RNase H type-1 domain maps to 1-142; it reads MKKKIKIFID…CDFLAKISAK (142 aa). Mg(2+) contacts are provided by aspartate 10, glutamate 48, aspartate 70, and aspartate 134.

It belongs to the RNase H family. In terms of assembly, monomer. It depends on Mg(2+) as a cofactor.

Its subcellular location is the cytoplasm. The enzyme catalyses Endonucleolytic cleavage to 5'-phosphomonoester.. Endonuclease that specifically degrades the RNA of RNA-DNA hybrids. This Wigglesworthia glossinidia brevipalpis protein is Ribonuclease H.